The chain runs to 312 residues: Malate dehydrogenase (312 aa).

NAD(+)-binding positions include 7 to 13 (GAAGGIG) and Asp34. The substrate site is built by Arg81 and Arg87. Residues Asn94 and 117–119 (ITN) each bind NAD(+). The substrate site is built by Asn119 and Arg153. The active-site Proton acceptor is the His177. Met227 contributes to the NAD(+) binding site.

It belongs to the LDH/MDH superfamily. MDH type 1 family. As to quaternary structure, homodimer.

It catalyses the reaction (S)-malate + NAD(+) = oxaloacetate + NADH + H(+). In terms of biological role, catalyzes the reversible oxidation of malate to oxaloacetate. This is Malate dehydrogenase from Enterobacter sp. (strain 638).